A 194-amino-acid chain; its full sequence is Holliday junction branch migration complex subunit RuvA (194 aa).

A domain I region spans residues 1–64; that stretch reads MIAYIQGSIT…QDAHTLYGFS (64 aa). The segment at 65 to 143 is domain II; it reads TIEEKQCFLQ…KVGNMLSLQP (79 aa). The flexible linker stretch occupies residues 144-150; the sequence is SGQEAIY. Residues 150–194 are domain III; the sequence is YQEALAALSKLGIHKSTAEKTVAAILKEHQGEITVESLIKLALKG.

It belongs to the RuvA family. In terms of assembly, homotetramer. Forms an RuvA(8)-RuvB(12)-Holliday junction (HJ) complex. HJ DNA is sandwiched between 2 RuvA tetramers; dsDNA enters through RuvA and exits via RuvB. An RuvB hexamer assembles on each DNA strand where it exits the tetramer. Each RuvB hexamer is contacted by two RuvA subunits (via domain III) on 2 adjacent RuvB subunits; this complex drives branch migration. In the full resolvosome a probable DNA-RuvA(4)-RuvB(12)-RuvC(2) complex forms which resolves the HJ.

Its subcellular location is the cytoplasm. In terms of biological role, the RuvA-RuvB-RuvC complex processes Holliday junction (HJ) DNA during genetic recombination and DNA repair, while the RuvA-RuvB complex plays an important role in the rescue of blocked DNA replication forks via replication fork reversal (RFR). RuvA specifically binds to HJ cruciform DNA, conferring on it an open structure. The RuvB hexamer acts as an ATP-dependent pump, pulling dsDNA into and through the RuvAB complex. HJ branch migration allows RuvC to scan DNA until it finds its consensus sequence, where it cleaves and resolves the cruciform DNA. This chain is Holliday junction branch migration complex subunit RuvA, found in Amoebophilus asiaticus (strain 5a2).